We begin with the raw amino-acid sequence, 543 residues long: Hydroxylamine reductase (543 aa).

Positions 5, 8, 17, and 23 each coordinate [4Fe-4S] cluster. Residues His-236, Glu-260, Cys-304, Cys-398, Cys-426, Cys-451, Glu-486, and Lys-488 each coordinate hybrid [4Fe-2O-2S] cluster. Cys-398 bears the Cysteine persulfide mark.

It belongs to the HCP family. The cofactor is [4Fe-4S] cluster. It depends on hybrid [4Fe-2O-2S] cluster as a cofactor.

It localises to the cytoplasm. The catalysed reaction is A + NH4(+) + H2O = hydroxylamine + AH2 + H(+). Its function is as follows. Catalyzes the reduction of hydroxylamine to form NH(3) and H(2)O. The polypeptide is Hydroxylamine reductase (Bacteroides fragilis (strain ATCC 25285 / DSM 2151 / CCUG 4856 / JCM 11019 / LMG 10263 / NCTC 9343 / Onslow / VPI 2553 / EN-2)).